Consider the following 843-residue polypeptide: Aconitase AMT8-2 (843 aa).

258 to 260 (DSH) is a substrate binding site. [4Fe-4S] cluster-binding residues include cysteine 450, cysteine 513, and cysteine 516. Residues arginine 536, arginine 541, and 712–713 (SR) contribute to the substrate site.

It belongs to the aconitase/IPM isomerase family.

It participates in mycotoxin biosynthesis. In terms of biological role, aconitase; part of the gene clusters that mediate the biosynthesis of AM-toxins, host-selective toxins (HSTs) causing Alternaria blotch on apple, a worldwide distributed disease. AM-toxins are cyclic depsipeptides containing the 3 residues 2-hydroxy-isovaleric acid (2-HIV), dehydroalanine, L-alanine which are common for all 3 AM-toxins I to III. The fourth precursor is L-alpha-amino-methoxyphenyl-valeric acid (L-Amv) for AM-toxin I, L-alpha-amino-phenyl-valeric acid (L-Apv) for AM-toxin II, and L-alpha-amino-hydroxyphenyl-valeric acid (L-Ahv) for AM-toxin III. AM-toxins have two target sites for affecting susceptible apple cells; they cause invagination of the plasma membrane and electrolyte loss and chloroplast disorganization. The non-ribosomal peptide synthetase AMT1 contains 4 catalytic modules and is responsible for activation of each residue in AM-toxin. The aldo-keto reductase AMT2 catalyzes the conversion of 2-keto-isovaleric acid (2-KIV) to 2-hydroxy-isovaleric acid (2-HIV), one of the precursor residues incorporated by AMT1 during AM-toxin biosynthesis, by reduction of its ketone to an alcohol. The cytochrome P450 monooxygenase AMT3 and the thioesterase AMT4 are also important for AM-toxin production, but their exact function within the AM-toxin biosynthesis are not known yet. Up to 21 proteins (including AMT1 to AMT4) are predicted to be involved in AM-toxin biosynthesis since their expression ishighly up-regulated in AM-toxin-producing cultures. In Alternaria alternata (Alternaria rot fungus), this protein is Aconitase AMT8-2.